Here is a 414-residue protein sequence, read N- to C-terminus: NAC domain-containing protein 35 (414 aa).

Positions 1–21 (MAIVSSTTSIIPMSNQVNNNE) are enriched in polar residues. A disordered region spans residues 1–47 (MAIVSSTTSIIPMSNQVNNNEKGIEDNDHRGGQESHVQNEDEADDHD). A compositionally biased stretch (basic and acidic residues) spans 22 to 47 (KGIEDNDHRGGQESHVQNEDEADDHD). Residues 51-198 (VMPGFRFHPT…EISLCRVYKR (148 aa)) enclose the NAC domain. Residues 149 to 204 (IGLKKTLVFYSGKAPKGTRTSWIMNEYRLPHHETEKYQKAEISLCRVYKRPGVEDH) mediate DNA binding. A disordered region spans residues 200 to 251 (GVEDHPSVPRSLSTRHHNHNSSTSSRLALRQQQHHSSSSNHSDNNLNNNNNI). The segment covering 233-251 (HHSSSSNHSDNNLNNNNNI) has biased composition (low complexity).

In terms of tissue distribution, expressed in aerial organs in early stages of seedling development.

It localises to the nucleus. Transcription factor that acts as a floral repressor. Controls flowering time by negatively regulating CONSTANS (CO) expression in a GIGANTEA (GI)-independent manner. Regulates the plant cold response by positive regulation of the cold response genes COR15A and KIN1. May coordinate cold response and flowering time. In Arabidopsis thaliana (Mouse-ear cress), this protein is NAC domain-containing protein 35.